The sequence spans 76 residues: uncharacterized protein (76 aa).

An N-terminal signal peptide occupies residues methionine 1–alanine 22.

This is an uncharacterized protein from Escherichia coli O157:H7.